A 602-amino-acid chain; its full sequence is Elongation factor 4 (602 aa).

The 183-residue stretch at 7-189 (KYIRNFSIVA…AIVNKVPAPE (183 aa)) folds into the tr-type G domain. Residues 19–24 (DHGKST) and 136–139 (NKID) contribute to the GTP site.

This sequence belongs to the TRAFAC class translation factor GTPase superfamily. Classic translation factor GTPase family. LepA subfamily.

The protein resides in the cell membrane. It carries out the reaction GTP + H2O = GDP + phosphate + H(+). Its function is as follows. Required for accurate and efficient protein synthesis under certain stress conditions. May act as a fidelity factor of the translation reaction, by catalyzing a one-codon backward translocation of tRNAs on improperly translocated ribosomes. Back-translocation proceeds from a post-translocation (POST) complex to a pre-translocation (PRE) complex, thus giving elongation factor G a second chance to translocate the tRNAs correctly. Binds to ribosomes in a GTP-dependent manner. The protein is Elongation factor 4 of Clostridium botulinum (strain Okra / Type B1).